A 609-amino-acid polypeptide reads, in one-letter code: Actin-interacting protein 1-2 (609 aa).

12 WD repeats span residues 2 to 42 (ELSE…VTLD), 54 to 93 (EHAY…VLKN), 97 to 141 (VLAG…GEFD), 142 to 182 (GHSR…FKLS), 185 to 224 (EHSN…ILGE), 230 to 269 (GHKG…SGSL), 277 to 318 (GSSG…KSPF), 322 to 362 (GHMK…CGKL), 445 to 484 (NLGF…LTEE), 489 to 528 (RHRG…MKLK), 532 to 571 (YHSA…SSRM), and 576 to 609 (AHLG…FTPQ).

As to expression, expressed in leaves, stems, flower buds and flowers.

Functionally, binds actin. Enhances the F-actin depolymerization activity of actin-depolymerizing factor (ADF) proteins. The polypeptide is Actin-interacting protein 1-2 (Arabidopsis thaliana (Mouse-ear cress)).